Here is a 200-residue protein sequence, read N- to C-terminus: Putative glucose-6-phosphate isomerase 2 (200 aa).

Positions 92, 94, 101, and 140 each coordinate Fe cation.

Belongs to the archaeal-type GPI family. Homodimer. Fe cation is required as a cofactor.

The protein resides in the cytoplasm. The enzyme catalyses alpha-D-glucose 6-phosphate = beta-D-fructose 6-phosphate. Its pathway is carbohydrate degradation; glycolysis; D-glyceraldehyde 3-phosphate and glycerone phosphate from D-glucose: step 2/4. This chain is Putative glucose-6-phosphate isomerase 2 (pgiA2), found in Rhizobium meliloti (strain 1021) (Ensifer meliloti).